A 296-amino-acid chain; its full sequence is tRNA uridine(34) hydroxylase (296 aa).

A Rhodanese domain is found at 130-225 (RGDDVVFFDG…YGEAYGNDGY (96 aa)). Catalysis depends on cysteine 185, which acts as the Cysteine persulfide intermediate.

Belongs to the TrhO family.

The enzyme catalyses uridine(34) in tRNA + AH2 + O2 = 5-hydroxyuridine(34) in tRNA + A + H2O. Its function is as follows. Catalyzes oxygen-dependent 5-hydroxyuridine (ho5U) modification at position 34 in tRNAs. The polypeptide is tRNA uridine(34) hydroxylase (Corynebacterium kroppenstedtii (strain DSM 44385 / JCM 11950 / CIP 105744 / CCUG 35717)).